A 499-amino-acid chain; its full sequence is Glycerol kinase (499 aa).

Threonine 13 contacts ADP. Residues threonine 13, threonine 14, and serine 15 each contribute to the ATP site. Threonine 13 is a binding site for sn-glycerol 3-phosphate. An ADP-binding site is contributed by arginine 17. Residues arginine 83, glutamate 84, tyrosine 135, and aspartate 245 each contribute to the sn-glycerol 3-phosphate site. Glycerol-binding residues include arginine 83, glutamate 84, tyrosine 135, aspartate 245, and glutamine 246. Positions 267 and 310 each coordinate ADP. Positions 267, 310, 314, and 411 each coordinate ATP. ADP contacts are provided by alanine 411 and asparagine 415.

It belongs to the FGGY kinase family.

The catalysed reaction is glycerol + ATP = sn-glycerol 3-phosphate + ADP + H(+). It functions in the pathway polyol metabolism; glycerol degradation via glycerol kinase pathway; sn-glycerol 3-phosphate from glycerol: step 1/1. With respect to regulation, inhibited by fructose 1,6-bisphosphate (FBP). Key enzyme in the regulation of glycerol uptake and metabolism. Catalyzes the phosphorylation of glycerol to yield sn-glycerol 3-phosphate. This Xylella fastidiosa (strain 9a5c) protein is Glycerol kinase.